A 766-amino-acid chain; its full sequence is LPS-assembly protein LptD (766 aa).

The signal sequence occupies residues 1–18; it reads MQIRYFLALSLLPNIVLA.

Belongs to the LptD family. As to quaternary structure, component of the lipopolysaccharide transport and assembly complex. Interacts with LptE and LptA.

It is found in the cell outer membrane. In terms of biological role, together with LptE, is involved in the assembly of lipopolysaccharide (LPS) at the surface of the outer membrane. This chain is LPS-assembly protein LptD, found in Shewanella frigidimarina (strain NCIMB 400).